The sequence spans 252 residues: Homeobox protein EMX2 (252 aa).

The segment at residues 154–213 is a DNA-binding region (homeobox); that stretch reads PKRIRTAFSPSQLLRLEHAFEKNHYVVGAERKQLAHSLSLTETQVKVWFQNRRTKFKRQK. The interval 212–252 is disordered; the sequence is QKLEEEGSDSQQKKKGTHHINRWRIATKQASPEEIDVTSDD. Positions 224-233 are enriched in basic residues; that stretch reads KKKGTHHINR.

This sequence belongs to the EMX homeobox family. In terms of assembly, interacts with translation initiation factor EIF4E. As to expression, cerebral cortex.

It is found in the nucleus. Its subcellular location is the cell projection. The protein localises to the axon. Transcription factor, which in cooperation with EMX1, acts to generate the boundary between the roof and archipallium in the developing brain. May function in combination with OTX1/2 to specify cell fates in the developing central nervous system. In the inner ear, it controls the distribution of GPR156 at hair cell boundaries, and regulates the organization of stereociliary bundles in opposite orientations across the line of polarity reversal (LPR). The protein is Homeobox protein EMX2 (EMX2) of Homo sapiens (Human).